A 273-amino-acid polypeptide reads, in one-letter code: Chaperone protein PsaB (273 aa).

An N-terminal signal peptide occupies residues 1-31; it reads MKNLFFSAYKKVFSYITSIVIFMVSLPYAYS. Cys128 and Cys163 form a disulfide bridge.

This sequence belongs to the periplasmic pilus chaperone family.

It is found in the periplasm. Functionally, required for the biogenesis of the pH 6 antigen. The protein is Chaperone protein PsaB (psaB) of Yersinia pestis.